A 648-amino-acid chain; its full sequence is Macrolide export ATP-binding/permease protein MacB (648 aa).

Residues 5–243 (LELCNVSRSY…QGVDAAVVNT (239 aa)) enclose the ABC transporter domain. Residue 41–48 (GVSGSGKS) participates in ATP binding. 5 consecutive transmembrane segments (helical) span residues 273-293 (LLTMLGIIIGIASVVSIVVVG), 417-437 (ANVVGEVVLAGNMPVIVIGVA), 523-543 (LFLTLVAVISLVVGGIGVMNI), 577-597 (VLVCLVGGALGISLSMFIAFM), and 611-631 (LTALASAFLCSTFTGILFGWL).

This sequence belongs to the ABC transporter superfamily. Macrolide exporter (TC 3.A.1.122) family. In terms of assembly, homodimer. Part of the tripartite efflux system MacAB-TolC, which is composed of an inner membrane transporter, MacB, a periplasmic membrane fusion protein, MacA, and an outer membrane component, TolC. The complex forms a large protein conduit and can translocate molecules across both the inner and outer membranes. Interacts with MacA.

Its subcellular location is the cell inner membrane. Part of the tripartite efflux system MacAB-TolC. MacB is a non-canonical ABC transporter that contains transmembrane domains (TMD), which form a pore in the inner membrane, and an ATP-binding domain (NBD), which is responsible for energy generation. Confers resistance against macrolides. The sequence is that of Macrolide export ATP-binding/permease protein MacB from Salmonella choleraesuis (strain SC-B67).